Consider the following 492-residue polypeptide: MAALGSLPTLPEGLTYDDVLLIPQRSPVRSRKAVNTSTRLSRNIHLKIPIVASNMDTVCEDKTAVTMAREGGIGILHRFCSIEEQCAMVRKVKRAQSFLIEDPRMILPSATKAEALEELNWSGRKGGVSCLMVVDDLTSRRLCGVLTKSDLTFATGSALVETLMTPVSRMVVSTNTAITLEEAREVMRTKRTKNIPLLGPKGELLYLITRSDILKLTGNLNATLDSRGRLIVGAAIGVKKEDHERAAALVDAGADVLVVDIAHGHSDLCIDMVKALKVNPLTNKVDIIAGNIATAEAAQDLIDAGADGLKIGVGPGSICITRLVAGSGVPQLSSVMDCARVAKKHGVPCIADGGIKTAGDICKAIAAGADTVMLGNMLAGTDEAPGRVLVKDGKKVKIIRGMAGFGANISKAEREQRLDEDVFHDLVPEGVEGSVPCKGPLAPILKQLVGGLRSGISYCGSHSIADMQQRARFVRMSGAGLRESGSHDISKL.

NADP(+)-binding positions include 30 to 31 and Arg78; that span reads SR. CBS domains lie at 99 to 162 and 164 to 223; these read LIED…LVET and MTPV…LNAT. Residues 260–262 and 313–314 contribute to the NADP(+) site; these read DIA and VG. Positions 314, 316, and 319 each coordinate K(+). Cys319 serves as the catalytic Thioimidate intermediate. Residue Thr321 is the Proton donor/acceptor of the active site. Residue Arg322 participates in K(+) binding. GMP-binding positions include 352–354, 375–376, and 401–403; these read DGG, GN, and GMA. NADP(+)-binding positions include Met402 and 454–457; that span reads SGIS. Residues 490–492 carry the Microbody targeting signal motif; it reads SKL.

It belongs to the IMPDH/GMPR family. GuaC type 1 subfamily. Homotetramer.

Its subcellular location is the glycosome. The catalysed reaction is IMP + NH4(+) + NADP(+) = GMP + NADPH + 2 H(+). Its activity is regulated as follows. Activated by GTP and inhibited by ATP and IMP. Mycophenolic acid (MPA) is a competitive inhibitor of the enzyme with respect to NADPH. Functionally, catalyzes the irreversible NADPH-dependent deamination of GMP to IMP. It functions in the conversion of nucleobase, nucleoside and nucleotide derivatives of G to A nucleotides, and in maintaining the intracellular balance of A and G nucleotides. The sequence is that of GMP reductase from Leishmania major.